The chain runs to 584 residues: MTFYLSGFRSIPKLWKSNPYFELGPATSSTPFFLCAIGNQQRWFSVKPTTPPNSKALNLLDTKARTHRKGNDNNGQVSSDPHYFAAGAAKKRSHIGANPQNQGHALPVRSSVQLPTKPLNSAEWDKLKEDFKGKASFEDFIISQMARNCCSVDVAKSLLAWVAAKNNGIVGYNLLVKYLYLCVFHKQTSEVIDVYEIMKAKYKSLESGGYTLLIRGLIHSDRWRESLLLLEDIKKVMVPSKKNYGDCIQGALLHQDVNTAWNLYQELIGHNLIPPLETLKAFFDYGKDINDDHYSDKLLDILLYLRNNQLYPGESFAHSIKTWFESIPGRQWKGQFTTIQKSGQCSGCGRTIEPIHLSPEEYEFLKEKIMRDVIDGGDQYKKTTPQELKRFESFVNSCPPFDIVIDGLNVAKMFPKGRESQNLLGVVSQLAQQNLQLLVLGRKHMLRPSSQWRKEEMEQVRKQAHCFFADNISEDDPFLLYATLNSGNHCKFITKDLLRDHKACLPDARTQRLFFKWQQGHQLAIMKGFQKSKLTFQHILSYDTVVQRTGDSWHIPYDEDLVQRSSCEVPTKWLCLQRKTPDPC.

Residues 1-43 (MTFYLSGFRSIPKLWKSNPYFELGPATSSTPFFLCAIGNQQRW) constitute a mitochondrion transit peptide. The region spanning 339 to 575 (IQKSGQCSGC…SCEVPTKWLC (237 aa)) is the PRORP domain. The Zn(2+) site is built by Cys-345 and Cys-348. Mg(2+) contacts are provided by Asp-406, Asp-475, Asp-476, and Asp-496. Zn(2+) is bound by residues His-554 and Cys-575.

The protein belongs to the PPR family. P subfamily. As to quaternary structure, catalytic component of mitochondrial ribonuclease P, a complex composed of TRMT10C/MRPP1, HSD17B10/MRPP2 and PRORP/MRPP3. The cofactor is Mg(2+). Mn(2+) is required as a cofactor. In terms of processing, degraded by LONP1 following mitochondrial unfolded protein response, probably leading to inhibit translation in mitochondrion. In terms of tissue distribution, detected, after the onset of hearing, in the organ of Corti around the afferent and efferent synapses of the inner hair cells and the efferent synapses of the outer hair cells.

Its subcellular location is the mitochondrion. It carries out the reaction Endonucleolytic cleavage of RNA, removing 5'-extranucleotides from tRNA precursor.. Its function is as follows. Catalytic ribonuclease component of mitochondrial ribonuclease P, a complex composed of TRMT10C/MRPP1, HSD17B10/MRPP2 and PRORP, which cleaves tRNA molecules in their 5'-ends. The presence of TRMT10C/MRPP1, HSD17B10/MRPP2 is required to catalyze tRNA molecules in their 5'-ends. The protein is Mitochondrial ribonuclease P catalytic subunit (Prorp) of Mus musculus (Mouse).